The following is a 380-amino-acid chain: Chaperone protein DnaJ 2 (380 aa).

A J domain is found at 10-75 (DYYKILGVSK…KKRKEYDQAR (66 aa)). Over residues 32–56 (KIARDNHPDSHPGDKAAEARFKEAS) the composition is skewed to basic and acidic residues. The disordered stretch occupies residues 32–63 (KIARDNHPDSHPGDKAAEARFKEASEANDVLS). Residues 151 to 230 (GTTVTMDMVS…CHGSGRAKST (80 aa)) form a CR-type zinc finger. Zn(2+)-binding residues include Cys164, Cys167, Cys181, Cys184, Cys204, Cys207, Cys218, and Cys221. 4 CXXCXGXG motif repeats span residues 164–171 (CQACRGTG), 181–188 (CSTCQGSG), 204–211 (CPDCHGRG), and 218–225 (CQVCHGSG).

This sequence belongs to the DnaJ family. As to quaternary structure, homodimer. Zn(2+) serves as cofactor.

Its subcellular location is the cytoplasm. Its function is as follows. Participates actively in the response to hyperosmotic and heat shock by preventing the aggregation of stress-denatured proteins and by disaggregating proteins, also in an autonomous, DnaK-independent fashion. Unfolded proteins bind initially to DnaJ; upon interaction with the DnaJ-bound protein, DnaK hydrolyzes its bound ATP, resulting in the formation of a stable complex. GrpE releases ADP from DnaK; ATP binding to DnaK triggers the release of the substrate protein, thus completing the reaction cycle. Several rounds of ATP-dependent interactions between DnaJ, DnaK and GrpE are required for fully efficient folding. Also involved, together with DnaK and GrpE, in the DNA replication of plasmids through activation of initiation proteins. The chain is Chaperone protein DnaJ 2 from Cutibacterium acnes (strain DSM 16379 / KPA171202) (Propionibacterium acnes).